We begin with the raw amino-acid sequence, 248 residues long: Mannosylfructose-phosphate phosphatase (248 aa).

This sequence belongs to the sucrose phosphatase family.

The catalysed reaction is beta-D-fructofuranosyl alpha-D-mannopyranoside 6(F)-phosphate + H2O = beta-D-fructofuranosyl alpha-D-mannopyranoside + phosphate. The protein operates within carbohydrate metabolism; mannosylfructose biosynthesis; beta-D-fructofuranosyl alpha-D-mannopyranoside from D-fructose 6-phosphate and GDP-alpha-D-mannose: step 2/2. Inhibited by the phosphatase inhibitors fluoride, molybdate and orthovanadate. The sequence is that of Mannosylfructose-phosphate phosphatase from Agrobacterium fabrum (strain C58 / ATCC 33970) (Agrobacterium tumefaciens (strain C58)).